An 835-amino-acid polypeptide reads, in one-letter code: BCL11 transcription factor A (835 aa).

Over residues 1–12 (MSRRKQGKPQHL) the composition is skewed to basic residues. Positions 1 to 41 (MSRRKQGKPQHLSKREFSPEPLEAILTDDEPDHGPLGAPEG) are disordered. Residues 1–210 (MSRRKQGKPQ…SEHGSPLTPR (210 aa)) are required for nuclear body formation and for SUMO1 recruitment. The segment at 45–71 (LLTCGQCQMNFPLGDILIFIEHKRKQC) adopts a C2HC-type zinc-finger fold. Residues C48, C51, H66, and C71 each coordinate Zn(2+). S86 bears the Phosphoserine mark. Residue K123 forms a Glycyl lysine isopeptide (Lys-Gly) (interchain with G-Cter in SUMO2) linkage. At I162 the chain carries Phosphothreonine. K164 is covalently cross-linked (Glycyl lysine isopeptide (Lys-Gly) (interchain with G-Cter in SUMO2)). The C2H2-type 1 zinc finger occupies 170–193 (YTCTTCKQPFTSAWFLLQHAQNTH). A Phosphoserine modification is found at S205. P214 bears the Phosphothreonine mark. Position 271 is an asymmetric dimethylarginine (R271). A disordered region spans residues 323-376 (AGNTSSPPLSPGRPSPMQRLLQPFQPGSKPPFLATPPLPPLQSAPPPSQPPVKS). A phosphoserine mark is found at S332 and S337. Over residues 355-372 (LATPPLPPLQSAPPPSQP) the composition is skewed to pro residues. C2H2-type zinc fingers lie at residues 377–399 (KSCE…RRSH) and 405–429 (YKCN…THMH). Basic residues predominate over residues 421-430 (KRHMKTHMHK). Disordered regions lie at residues 421–458 (KRHM…LVGS), 471–512 (KSEN…ERVD), and 572–619 (RSHL…GLSK). Over residues 441 to 450 (GLSTASSPEP) the composition is skewed to polar residues. 2 positions are modified to phosphoserine: S446 and S447. A compositionally biased stretch (acidic residues) spans 482–506 (NGDEEEEEDDEEEEEEEEEEEEELT). Basic and acidic residues predominate over residues 574-584 (HLAEAEGHRDT). The residue at position 608 (S608) is a Phosphoserine. K620 is covalently cross-linked (Glycyl lysine isopeptide (Lys-Gly) (interchain with G-Cter in SUMO2)). Phosphoserine occurs at positions 625 and 630. K634 participates in a covalent cross-link: Glycyl lysine isopeptide (Lys-Gly) (interchain with G-Cter in SUMO1). Residues 682–696 (SPFASSSEHSSENGS) are compositionally biased toward low complexity. At T701 the chain carries Phosphothreonine. Residues 706 to 720 (LDGGISGRSGTGSGG) show a composition bias toward gly residues. The tract at residues 737 to 835 (EGRRSDTCEY…RVLNNDIKTE (99 aa)) is DNA-binding. The C2H2-type 4 zinc finger occupies 742-764 (DTCEYCGKVFKNCSNLTVHRRSH). Residues C744, C747, H760, and H764 each contribute to the Zn(2+) site. Residues 764–773 (HTGERPYKCE) are compositionally biased toward polar residues. A disordered region spans residues 765–769 (TGERP). The C2H2-type 5 zinc finger occupies 770-792 (YKCELCNYACAQSSKLTRHMKTH). Residues C772, C775, H788, and H792 each contribute to the Zn(2+) site. The disordered stretch occupies residues 793 to 799 (GQVGKDV). The C2H2-type 6 zinc-finger motif lies at 800 to 823 (YKCEICKMPFSVYSTLEKHMKKWH). C802, C805, H818, and H823 together coordinate Zn(2+).

Homotetrameric; self-associates via C2HC-type zinc finger domain. Interacts with MTA2, a component of the nucleosome remodeling and deacetylase (NuRD) repressor complex. Interacts with NR2F1, PIAS3, NR2F2 and NR2F6. Interacts with TBR1. In terms of processing, sumoylated with SUMO1. In terms of tissue distribution, isoforms are expressed in a tissue-specific fashion. Isoforms 1, isoform 2, and isoform 3 are expressed at similar levels in testis, kidney and spleen. Isoform 1 is expressed in the stomach, and isoform 2 is expressed exclusively in the lung. Overexpression following proviral integration in hematopoietic cells results in the generation of myeloid leukemia.

It localises to the cytoplasm. The protein resides in the nucleus. Functionally, transcription factor. Associated with the BAF SWI/SNF chromatin remodeling complex. Binds to the 5'-TGACCA-3' sequence motif in regulatory regions of target genes. Involved in brain development. May play a role in hematopoiesis. Essential factor in lymphopoiesis, required for B-cell formation in fetal liver. May function as a modulator of the transcriptional repression activity of NR2F2. The sequence is that of BCL11 transcription factor A (Bcl11a) from Mus musculus (Mouse).